An 84-amino-acid chain; its full sequence is Small ribosomal subunit protein uS17 (84 aa).

This sequence belongs to the universal ribosomal protein uS17 family. In terms of assembly, part of the 30S ribosomal subunit.

In terms of biological role, one of the primary rRNA binding proteins, it binds specifically to the 5'-end of 16S ribosomal RNA. This chain is Small ribosomal subunit protein uS17, found in Clostridium botulinum (strain Alaska E43 / Type E3).